Reading from the N-terminus, the 26-residue chain is uncharacterized protein (26 aa).

This is an uncharacterized protein from Archaeoglobus fulgidus (strain ATCC 49558 / DSM 4304 / JCM 9628 / NBRC 100126 / VC-16).